We begin with the raw amino-acid sequence, 933 residues long: Isoleucine--tRNA ligase (933 aa).

Positions 57 to 67 (PYANGNIHVGH) match the 'HIGH' region motif. Glu554 contributes to the L-isoleucyl-5'-AMP binding site. The 'KMSKS' region motif lies at 595 to 599 (KMSKS). An ATP-binding site is contributed by Lys598.

This sequence belongs to the class-I aminoacyl-tRNA synthetase family. IleS type 1 subfamily. Monomer.

It localises to the cytoplasm. It carries out the reaction tRNA(Ile) + L-isoleucine + ATP = L-isoleucyl-tRNA(Ile) + AMP + diphosphate. Functionally, catalyzes the attachment of isoleucine to tRNA(Ile). As IleRS can inadvertently accommodate and process structurally similar amino acids such as valine, to avoid such errors it has two additional distinct tRNA(Ile)-dependent editing activities. One activity is designated as 'pretransfer' editing and involves the hydrolysis of activated Val-AMP. The other activity is designated 'posttransfer' editing and involves deacylation of mischarged Val-tRNA(Ile). The chain is Isoleucine--tRNA ligase from Streptococcus pyogenes serotype M1.